The following is a 169-amino-acid chain: Chorismate pyruvate-lyase (169 aa).

The substrate site is built by M37, R79, L117, and E158.

This sequence belongs to the UbiC family. Monomer.

It is found in the cytoplasm. The catalysed reaction is chorismate = 4-hydroxybenzoate + pyruvate. Its pathway is cofactor biosynthesis; ubiquinone biosynthesis. Removes the pyruvyl group from chorismate, with concomitant aromatization of the ring, to provide 4-hydroxybenzoate (4HB) for the ubiquinone pathway. This chain is Chorismate pyruvate-lyase, found in Proteus mirabilis (strain HI4320).